Reading from the N-terminus, the 89-residue chain is Small ribosomal subunit protein uS15 (89 aa).

This sequence belongs to the universal ribosomal protein uS15 family. In terms of assembly, part of the 30S ribosomal subunit. Forms a bridge to the 50S subunit in the 70S ribosome, contacting the 23S rRNA.

Its function is as follows. One of the primary rRNA binding proteins, it binds directly to 16S rRNA where it helps nucleate assembly of the platform of the 30S subunit by binding and bridging several RNA helices of the 16S rRNA. Forms an intersubunit bridge (bridge B4) with the 23S rRNA of the 50S subunit in the ribosome. This is Small ribosomal subunit protein uS15 from Salinispora arenicola (strain CNS-205).